The sequence spans 342 residues: GTPase Obg (342 aa).

One can recognise an Obg domain in the interval 1–159 (MKFLDEAKVY…MWIWLRLKLI (159 aa)). The region spanning 160 to 327 (ADAGLVGLPN…ALRALQTEID (168 aa)) is the OBG-type G domain. Residues 166–173 (GLPNAGKS), 191–195 (FTTLH), 212–215 (DIPG), 279–282 (SKAD), and 308–310 (SSA) each bind GTP. 2 residues coordinate Mg(2+): serine 173 and threonine 193.

The protein belongs to the TRAFAC class OBG-HflX-like GTPase superfamily. OBG GTPase family. As to quaternary structure, monomer. Requires Mg(2+) as cofactor.

The protein localises to the cytoplasm. Functionally, an essential GTPase which binds GTP, GDP and possibly (p)ppGpp with moderate affinity, with high nucleotide exchange rates and a fairly low GTP hydrolysis rate. Plays a role in control of the cell cycle, stress response, ribosome biogenesis and in those bacteria that undergo differentiation, in morphogenesis control. The chain is GTPase Obg from Methylobacterium radiotolerans (strain ATCC 27329 / DSM 1819 / JCM 2831 / NBRC 15690 / NCIMB 10815 / 0-1).